The primary structure comprises 343 residues: Holliday junction branch migration complex subunit RuvB (343 aa).

The tract at residues methionine 1–tyrosine 182 is large ATPase domain (RuvB-L). The ATP site is built by leucine 21, arginine 22, glycine 63, lysine 66, threonine 67, threonine 68, arginine 172, tyrosine 182, and arginine 219. A Mg(2+)-binding site is contributed by threonine 67. Residues threonine 183–glutamate 253 form a small ATPAse domain (RuvB-S) region. A head domain (RuvB-H) region spans residues glycine 256–serine 343. 3 residues coordinate DNA: arginine 292, arginine 311, and arginine 316.

It belongs to the RuvB family. Homohexamer. Forms an RuvA(8)-RuvB(12)-Holliday junction (HJ) complex. HJ DNA is sandwiched between 2 RuvA tetramers; dsDNA enters through RuvA and exits via RuvB. An RuvB hexamer assembles on each DNA strand where it exits the tetramer. Each RuvB hexamer is contacted by two RuvA subunits (via domain III) on 2 adjacent RuvB subunits; this complex drives branch migration. In the full resolvosome a probable DNA-RuvA(4)-RuvB(12)-RuvC(2) complex forms which resolves the HJ.

Its subcellular location is the cytoplasm. The catalysed reaction is ATP + H2O = ADP + phosphate + H(+). Its function is as follows. The RuvA-RuvB-RuvC complex processes Holliday junction (HJ) DNA during genetic recombination and DNA repair, while the RuvA-RuvB complex plays an important role in the rescue of blocked DNA replication forks via replication fork reversal (RFR). RuvA specifically binds to HJ cruciform DNA, conferring on it an open structure. The RuvB hexamer acts as an ATP-dependent pump, pulling dsDNA into and through the RuvAB complex. RuvB forms 2 homohexamers on either side of HJ DNA bound by 1 or 2 RuvA tetramers; 4 subunits per hexamer contact DNA at a time. Coordinated motions by a converter formed by DNA-disengaged RuvB subunits stimulates ATP hydrolysis and nucleotide exchange. Immobilization of the converter enables RuvB to convert the ATP-contained energy into a lever motion, pulling 2 nucleotides of DNA out of the RuvA tetramer per ATP hydrolyzed, thus driving DNA branch migration. The RuvB motors rotate together with the DNA substrate, which together with the progressing nucleotide cycle form the mechanistic basis for DNA recombination by continuous HJ branch migration. Branch migration allows RuvC to scan DNA until it finds its consensus sequence, where it cleaves and resolves cruciform DNA. This is Holliday junction branch migration complex subunit RuvB from Erythrobacter litoralis (strain HTCC2594).